A 425-amino-acid chain; its full sequence is Serine--tRNA ligase (425 aa).

231–233 contacts L-serine; that stretch reads TAE. 262-264 contacts ATP; the sequence is RSE. Residue E285 coordinates L-serine. Position 349–352 (349–352) interacts with ATP; sequence EISS. S385 is an L-serine binding site.

It belongs to the class-II aminoacyl-tRNA synthetase family. Type-1 seryl-tRNA synthetase subfamily. As to quaternary structure, homodimer. The tRNA molecule binds across the dimer.

It is found in the cytoplasm. It catalyses the reaction tRNA(Ser) + L-serine + ATP = L-seryl-tRNA(Ser) + AMP + diphosphate + H(+). The enzyme catalyses tRNA(Sec) + L-serine + ATP = L-seryl-tRNA(Sec) + AMP + diphosphate + H(+). The protein operates within aminoacyl-tRNA biosynthesis; selenocysteinyl-tRNA(Sec) biosynthesis; L-seryl-tRNA(Sec) from L-serine and tRNA(Sec): step 1/1. In terms of biological role, catalyzes the attachment of serine to tRNA(Ser). Is also able to aminoacylate tRNA(Sec) with serine, to form the misacylated tRNA L-seryl-tRNA(Sec), which will be further converted into selenocysteinyl-tRNA(Sec). This is Serine--tRNA ligase from Bartonella bacilliformis (strain ATCC 35685 / KC583 / Herrer 020/F12,63).